The chain runs to 1017 residues: DNA replication licensing factor MCM6 (1017 aa).

2 disordered regions span residues 1–94 (MSSP…SFKS) and 200–257 (SDSL…TSPE). The span at 24–34 (SIGAGFGSSSG) shows a compositional bias: low complexity. Residues 35–83 (LDSQIGSRLHFPSSSQPHVSNSQTGPFVNDSTQFSSQRLQTDGSATNDM) show a composition bias toward polar residues. S78 is subject to Phosphoserine. Residues 209-223 (DEGQADEDEQQDDDM) are compositionally biased toward acidic residues. Over residues 224-257 (NGSSLPRDSGSSAAPGNGTSAMATRSITTSTSPE) the composition is skewed to polar residues. Phosphoserine occurs at positions 249 and 372. One can recognise an MCM domain in the interval 525 to 732 (IYDKLVRSIA…IDTELASHIV (208 aa)). 575 to 582 (GDPSTSKS) provides a ligand contact to ATP. Residues 707 to 710 (SRFD) carry the Arginine finger motif. T766 carries the post-translational modification Phosphothreonine. The tract at residues 852-901 (IESQSHAASGNNDDNDDGTGSGVITSEPPADIEEGQSEATARPGTSEKKK) is disordered.

The protein belongs to the MCM family. As to quaternary structure, component of the MCM2-7 complex. The complex forms a toroidal hexameric ring with the proposed subunit order MCM2-MCM6-MCM4-MCM7-MCM3-MCM5; loaded onto DNA, forms a head-head double hexamer. Interacts with MCM10.

The protein localises to the nucleus. It catalyses the reaction ATP + H2O = ADP + phosphate + H(+). Functionally, acts as a component of the MCM2-7 complex (MCM complex) which is the putative replicative helicase essential for 'once per cell cycle' DNA replication initiation and elongation in eukaryotic cells. The active ATPase sites in the MCM2-7 ring are formed through the interaction surfaces of two neighboring subunits such that a critical structure of a conserved arginine finger motif is provided in trans relative to the ATP-binding site of the Walker A box of the adjacent subunit. The six ATPase active sites, however, are likely to contribute differentially to the complex helicase activity. Once loaded onto DNA, double hexamers can slide on dsDNA in the absence of ATPase activity. Required for the entry in S phase and for cell division. In Saccharomyces cerevisiae (strain ATCC 204508 / S288c) (Baker's yeast), this protein is DNA replication licensing factor MCM6 (MCM6).